Here is a 415-residue protein sequence, read N- to C-terminus: MASRWWRWRRGCSWKPAARSPGPGSPGRAGPLGPSAAAEVRAQVHRRKGLDLSQIPYINLVKHLTSACPNVCRISRFHHTTPDSKTHSGEKYTDPFKLGWRDLKGLYEDIRKELLISTSELKEMSEYYFDGKGKAFRPIIVALMARACNIHHNNSRHVQASQRAIALIAEMIHTASLVHDDVIDDASSRRGKHTVNKIWGEKKAVLAGDLILSAASIALARIGNTTVISILTQVIEDLVRGEFLQLGSKENENERFAHYLEKTFKKTASLIANSCKAVSVLGCPDPVVHEIAYQYGKNVGIAFQLIDDVLDFTSCSDQMGKPTSADLKLGLATGPVLFACQQFPEMNAMIMRRFSLPGDVDRARQYVLQSDGVQQTTYLAQQYCHEAIREISKLRPSPERDALIQLSEIVLTRDK.

Positions 16 to 35 (PAARSPGPGSPGRAGPLGPS) are disordered. Isopentenyl diphosphate-binding residues include lysine 134, arginine 137, and histidine 173. Positions 180 and 184 each coordinate Mg(2+). Residue arginine 190 participates in isopentenyl diphosphate binding.

The protein belongs to the FPP/GGPP synthase family. In terms of assembly, heterotetramer composed of 2 PDSS1/DPS1 and 2 PDSS2/DLP1 subunits. Mg(2+) is required as a cofactor.

It is found in the mitochondrion. It carries out the reaction 7 isopentenyl diphosphate + (2E,6E)-farnesyl diphosphate = all-trans-decaprenyl diphosphate + 7 diphosphate. The catalysed reaction is 6 isopentenyl diphosphate + (2E,6E)-farnesyl diphosphate = all-trans-nonaprenyl diphosphate + 6 diphosphate. It functions in the pathway cofactor biosynthesis; ubiquinone biosynthesis. Functionally, heterotetrameric enzyme that catalyzes the condensation of farnesyl diphosphate (FPP), which acts as a primer, and isopentenyl diphosphate (IPP) to produce prenyl diphosphates of varying chain lengths and participates in the determination of the side chain of ubiquinone. Supplies nona and decaprenyl diphosphate, the precursors for the side chain of the isoprenoid quinones ubiquinone-9 (Q9)and ubiquinone-10 (Q10) respectively. The enzyme adds isopentenyl diphosphate molecules sequentially to farnesyl diphosphate with trans stereochemistry. The polypeptide is All trans-polyprenyl-diphosphate synthase PDSS1 (Homo sapiens (Human)).